A 387-amino-acid chain; its full sequence is Cell surface GPI-anchored protein ARB_01627 (387 aa).

The signal sequence occupies residues 1–19 (MAITKYLVSALAVAGLAFA). N-linked (GlcNAc...) asparagine glycosylation is found at N73, N175, N201, N206, N231, N236, N253, and N270. Residues 338 to 361 (TCRERQEKPKTGDDHSGGDEEGHK) show a composition bias toward basic and acidic residues. The interval 338 to 362 (TCRERQEKPKTGDDHSGGDEEGHKG) is disordered. Residue A364 is the site of GPI-anchor amidated alanine attachment. A propeptide spans 365-387 (AAFAKAPAAALLIAFVGALQFFL) (removed in mature form).

Belongs to the SPS2 family. Post-translationally, the GPI-anchor is attached to the protein in the endoplasmic reticulum and serves to target the protein to the cell surface. There, the glucosamine-inositol phospholipid moiety is cleaved off and the GPI-modified mannoprotein is covalently attached via its lipidless GPI glycan remnant to the 1,6-beta-glucan of the outer cell wall layer.

It localises to the cell membrane. It is found in the secreted. The protein localises to the cell wall. Functionally, required for proper cell wall integrity and for the correct assembly of the mannoprotein outer layer of the cell wall. The sequence is that of Cell surface GPI-anchored protein ARB_01627 from Arthroderma benhamiae (strain ATCC MYA-4681 / CBS 112371) (Trichophyton mentagrophytes).